The primary structure comprises 508 residues: Photosystem II CP47 reaction center protein (508 aa).

6 helical membrane passes run 21–36 (AVHI…WAGS), 101–115 (ILFS…IWHW), 140–156 (GIHL…FGAF), 203–218 (IAAG…FHLS), 237–252 (VLSS…AFVV), and 457–472 (SFAL…HGAR).

The protein belongs to the PsbB/PsbC family. PsbB subfamily. PSII is composed of 1 copy each of membrane proteins PsbA, PsbB, PsbC, PsbD, PsbE, PsbF, PsbH, PsbI, PsbJ, PsbK, PsbL, PsbM, PsbT, PsbX, PsbY, PsbZ, Psb30/Ycf12, at least 3 peripheral proteins of the oxygen-evolving complex and a large number of cofactors. It forms dimeric complexes. Requires Binds multiple chlorophylls. PSII binds additional chlorophylls, carotenoids and specific lipids. as cofactor.

Its subcellular location is the plastid. It localises to the chloroplast thylakoid membrane. In terms of biological role, one of the components of the core complex of photosystem II (PSII). It binds chlorophyll and helps catalyze the primary light-induced photochemical processes of PSII. PSII is a light-driven water:plastoquinone oxidoreductase, using light energy to abstract electrons from H(2)O, generating O(2) and a proton gradient subsequently used for ATP formation. This chain is Photosystem II CP47 reaction center protein, found in Oenothera biennis (German evening primrose).